We begin with the raw amino-acid sequence, 424 residues long: Phosphomethylpyrimidine synthase (424 aa).

Substrate-binding positions include N66, M95, Y124, H163, 185-187 (SRG), 226-229 (DGMR), and E265. H269 is a Zn(2+) binding site. F292 contacts substrate. Residue H333 coordinates Zn(2+). [4Fe-4S] cluster-binding residues include C408, C411, and C415.

It belongs to the ThiC family. Requires [4Fe-4S] cluster as cofactor.

It catalyses the reaction 5-amino-1-(5-phospho-beta-D-ribosyl)imidazole + S-adenosyl-L-methionine = 4-amino-2-methyl-5-(phosphooxymethyl)pyrimidine + CO + 5'-deoxyadenosine + formate + L-methionine + 3 H(+). Its pathway is cofactor biosynthesis; thiamine diphosphate biosynthesis. In terms of biological role, catalyzes the synthesis of the hydroxymethylpyrimidine phosphate (HMP-P) moiety of thiamine from aminoimidazole ribotide (AIR) in a radical S-adenosyl-L-methionine (SAM)-dependent reaction. This Thermotoga petrophila (strain ATCC BAA-488 / DSM 13995 / JCM 10881 / RKU-1) protein is Phosphomethylpyrimidine synthase.